Here is a 124-residue protein sequence, read N- to C-terminus: CLAVATA3/ESR (CLE)-related protein 45 (124 aa).

The signal sequence occupies residues 1 to 20 (MLGSSTRSMFFLLVCIGLLA). 2 N-linked (GlcNAc...) asparagine glycosylation sites follow: N25 and N96. Residues 71–109 (LNKNRRVLEEVNKDKIKAEETQERKNKTEDSFKSSKRRV) adopt a coiled-coil conformation. The segment covering 87–103 (KAEETQERKNKTEDSFK) has biased composition (basic and acidic residues). Residues 87–124 (KAEETQERKNKTEDSFKSSKRRVRRGSDPIHNKAQPFS) form a disordered region.

It belongs to the CLV3/ESR signal peptide family. Binds to SKM1 present in the pollen grain, particularly under relatively high temperature (at 30 degrees Celsius). Interacts with BAM3, especially in roots. In terms of tissue distribution, expressed at low levels in flowers, especially in pistils. Present in vascular tissues. In roots, confined to protophloem and sieve element precursor cells.

It localises to the secreted. The protein resides in the extracellular space. In terms of biological role, extracellular signal peptide that regulates cell fate. Represses root apical meristem maintenance. Represses protophloem differentiation in a BAM3-dependent manner. BRX, BAM3, and CLE45 act together to regulate the transition of protophloem cells from proliferation to differentiation, thus impinging on postembryonic growth capacity of the root meristem; this signaling pathway requires CRN and CLV2 and involves MAKR5 for its transduction/amplification. Triggers the accumulation of MAKR5 in developing sieve elements in a BAM3-dependent manner. Prevents, in a dose-dependent manner, auxin response in the root meristem thus leading in the repression of protophloem differentiation and periclinal sieve element precursor cell division. Promotes pollen tube growth prolongation in a SKM1 and SKM2-dependent manner, especially under relatively high temperature (at 30 degrees Celsius), thus conferring tolerance against high temperature probably through the maintenance of mitochondrial activity. Alleviates mitochondrial decay pollen tube in vitro culture. The sequence is that of CLAVATA3/ESR (CLE)-related protein 45 from Arabidopsis thaliana (Mouse-ear cress).